A 229-amino-acid polypeptide reads, in one-letter code: Pyridoxal phosphate homeostasis protein (229 aa).

Lys36 is subject to N6-(pyridoxal phosphate)lysine.

This sequence belongs to the pyridoxal phosphate-binding protein YggS/PROSC family. Monomer.

Functionally, pyridoxal 5'-phosphate (PLP)-binding protein, which is involved in PLP homeostasis. In Buchnera aphidicola subsp. Schizaphis graminum (strain Sg), this protein is Pyridoxal phosphate homeostasis protein.